Here is a 614-residue protein sequence, read N- to C-terminus: Putative Na(+)/H(+) antiporter YjbQ (614 aa).

The next 13 membrane-spanning stretches (helical) occupy residues 3–23, 32–52, 57–77, 107–127, 130–150, 163–183, 193–213, 225–244, 248–267, 282–302, 307–327, 338–358, and 368–388; these read HTSV…PILL, VVVA…NLVV, WLQT…GLEI, IFVG…LAGF, NAFL…VPTL, IILL…AVFS, MWLL…GRVF, GTIQ…LVAL, LGAE…SLLS, GFLI…WTLF, ILIM…IPVM, IFAS…AATI, and NMSG…PICF. Residues 401-519 form the RCK N-terminal domain; that stretch reads KKTITFIGAN…EQGISIFSIL (119 aa). Residues 533–614 enclose the RCK C-terminal domain; the sequence is PGVMKLLTNQ…VTDLKKTLEG (82 aa).

The protein belongs to the monovalent cation:proton antiporter 2 (CPA2) transporter (TC 2.A.37) family.

It is found in the cell membrane. With respect to regulation, binds cyclic di-AMP (c-di-AMP), which may regulate the transporter activity. In terms of biological role, probable Na(+)/H(+) antiporter. This Bacillus subtilis (strain 168) protein is Putative Na(+)/H(+) antiporter YjbQ.